A 727-amino-acid polypeptide reads, in one-letter code: LIM domain-binding protein 3 (727 aa).

The 84-residue stretch at 1 to 84 folds into the PDZ domain; that stretch reads MSYSVTLTGP…NLSLTLQKSK (84 aa). A phosphoserine mark is found at serine 44, serine 121, and serine 123. The tract at residues 86–197 is disordered; the sequence is PIPISTTAPP…GSSQPRQYNN (112 aa). A compositionally biased stretch (low complexity) spans 140 to 156; sequence PTFSPAFSRPSAFSSLA. The segment covering 188–197 has biased composition (polar residues); sequence GSSQPRQYNN. Residue serine 217 is modified to Phosphoserine. Arginine 219 is subject to Omega-N-methylarginine. Serine 223 carries the post-translational modification Phosphoserine. 2 disordered regions span residues 284–440 and 472–529; these read TEFM…YTPS and APSV…PQVP. The span at 312–385 shows a compositional bias: low complexity; it reads ATTPLLPASA…SAPATHTSYS (74 aa). Residues 428 to 440 are compositionally biased toward pro residues; that stretch reads PYTPSPAPAYTPS. A compositionally biased stretch (polar residues) spans 494-513; the sequence is DSFSQKFAPGKSTTSISKQT. 2 positions are modified to omega-N-methylarginine: arginine 516 and arginine 533. 3 LIM zinc-binding domains span residues 549-607, 608-667, and 668-727; these read PLCG…QFFA, PLCA…LFST, and KCHG…TINL.

As to quaternary structure, interacts via its LIM domains with various PKC isoforms. Interacts via its PDZ domain with the ACTN2 C-terminal region. Interacts with MYOZ1, MYOZ2 and MYOZ3. As to expression, expressed primarily in skeletal muscle and to a lesser extent in heart. Also detected in brain and placenta.

The protein localises to the cytoplasm. It is found in the perinuclear region. The protein resides in the cell projection. Its subcellular location is the pseudopodium. It localises to the cytoskeleton. The protein localises to the myofibril. It is found in the sarcomere. The protein resides in the z line. May function as an adapter in striated muscle to couple protein kinase C-mediated signaling via its LIM domains to the cytoskeleton. The protein is LIM domain-binding protein 3 of Homo sapiens (Human).